A 316-amino-acid chain; its full sequence is Probable peptidyl-tRNA hydrolase 2 (316 aa).

The tract at residues 1-127 is disordered; the sequence is MSENIPDIDP…SHPVDPQEPN (127 aa). The segment covering 44–53 has biased composition (polar residues); that stretch reads PTPSSVTVDN. Residues 75-89 are compositionally biased toward low complexity; it reads IPEVPIPSSAISISS. The UBA domain occupies 128–169; it reads EVNNEYLAHLLDLGFDEYTAVLALKRTNSAGVEQAVAWIVER. The segment at 170 to 193 is disordered; the sequence is SNESDFDEDSSSSENEADEEMGAV. A compositionally biased stretch (acidic residues) spans 173-190; it reads SDFDEDSSSSENEADEEM.

It belongs to the PTH2 family.

It catalyses the reaction an N-acyl-L-alpha-aminoacyl-tRNA + H2O = an N-acyl-L-amino acid + a tRNA + H(+). The natural substrate for this enzyme may be peptidyl-tRNAs which drop off the ribosome during protein synthesis. This Caenorhabditis elegans protein is Probable peptidyl-tRNA hydrolase 2.